The following is a 259-amino-acid chain: Thiazole synthase (259 aa).

Catalysis depends on lysine 99, which acts as the Schiff-base intermediate with DXP. Residues glycine 161, 187-188, and 209-219 contribute to the 1-deoxy-D-xylulose 5-phosphate site; these read AG and NSAIACAQNPI.

It belongs to the ThiG family. Homotetramer. Forms heterodimers with either ThiH or ThiS.

It localises to the cytoplasm. The catalysed reaction is [ThiS sulfur-carrier protein]-C-terminal-Gly-aminoethanethioate + 2-iminoacetate + 1-deoxy-D-xylulose 5-phosphate = [ThiS sulfur-carrier protein]-C-terminal Gly-Gly + 2-[(2R,5Z)-2-carboxy-4-methylthiazol-5(2H)-ylidene]ethyl phosphate + 2 H2O + H(+). Its pathway is cofactor biosynthesis; thiamine diphosphate biosynthesis. Its function is as follows. Catalyzes the rearrangement of 1-deoxy-D-xylulose 5-phosphate (DXP) to produce the thiazole phosphate moiety of thiamine. Sulfur is provided by the thiocarboxylate moiety of the carrier protein ThiS. In vitro, sulfur can be provided by H(2)S. This chain is Thiazole synthase, found in Aliarcobacter butzleri (strain RM4018) (Arcobacter butzleri).